The following is a 631-amino-acid chain: Glutamine--fructose-6-phosphate aminotransferase [isomerizing] (631 aa).

Cysteine 2 acts as the Nucleophile; for GATase activity in catalysis. The Glutamine amidotransferase type-2 domain maps to 2 to 225; it reads CGIVGYIGTQ…NGEIARLTPL (224 aa). 2 consecutive SIS domains span residues 298–446 and 480–621; these read LDPQ…QRHS and LAHE…VDQP. The active-site For Fru-6P isomerization activity is the lysine 626.

In terms of assembly, homodimer.

It is found in the cytoplasm. It carries out the reaction D-fructose 6-phosphate + L-glutamine = D-glucosamine 6-phosphate + L-glutamate. Catalyzes the first step in hexosamine metabolism, converting fructose-6P into glucosamine-6P using glutamine as a nitrogen source. This is Glutamine--fructose-6-phosphate aminotransferase [isomerizing] from Synechocystis sp. (strain ATCC 27184 / PCC 6803 / Kazusa).